We begin with the raw amino-acid sequence, 62 residues long: Photosystem II reaction center protein Z (62 aa).

The next 2 membrane-spanning stretches (helical) occupy residues 8-28 (AVFALISTSLILLIGVPVVFA) and 41-61 (FSGTSLWIGLVFLVGILNSLI).

The protein belongs to the PsbZ family. As to quaternary structure, PSII is composed of 1 copy each of membrane proteins PsbA, PsbB, PsbC, PsbD, PsbE, PsbF, PsbH, PsbI, PsbJ, PsbK, PsbL, PsbM, PsbT, PsbY, PsbZ, Psb30/Ycf12, at least 3 peripheral proteins of the oxygen-evolving complex and a large number of cofactors. It forms dimeric complexes.

It localises to the plastid. The protein localises to the chloroplast thylakoid membrane. Its function is as follows. May control the interaction of photosystem II (PSII) cores with the light-harvesting antenna, regulates electron flow through the 2 photosystem reaction centers. PSII is a light-driven water plastoquinone oxidoreductase, using light energy to abstract electrons from H(2)O, generating a proton gradient subsequently used for ATP formation. The polypeptide is Photosystem II reaction center protein Z (Pelargonium hortorum (Common geranium)).